The following is a 413-amino-acid chain: Type IV pilus assembly protein TapC (413 aa).

Helical transmembrane passes span 180 to 200 (YPAM…LFVI), 227 to 247 (FMQH…FLYV), 286 to 306 (LSTT…AAGA), and 386 to 406 (IMVV…LPIF).

This sequence belongs to the GSP F family.

Its subcellular location is the cell inner membrane. Functionally, involved in the translocation of the type IV pilin. The polypeptide is Type IV pilus assembly protein TapC (tapC) (Aeromonas hydrophila).